A 400-amino-acid chain; its full sequence is Transposase for insertion sequence element ISRM3 (400 aa).

This sequence belongs to the transposase mutator family.

Its function is as follows. Required for the transposition of the insertion element. The sequence is that of Transposase for insertion sequence element ISRM3 from Rhizobium meliloti (strain 1021) (Ensifer meliloti).